A 728-amino-acid polypeptide reads, in one-letter code: 1,4-alpha-glucan branching enzyme GlgB (728 aa).

The active-site Nucleophile is D405. E458 serves as the catalytic Proton donor.

This sequence belongs to the glycosyl hydrolase 13 family. GlgB subfamily. Monomer.

The catalysed reaction is Transfers a segment of a (1-&gt;4)-alpha-D-glucan chain to a primary hydroxy group in a similar glucan chain.. It participates in glycan biosynthesis; glycogen biosynthesis. In terms of biological role, catalyzes the formation of the alpha-1,6-glucosidic linkages in glycogen by scission of a 1,4-alpha-linked oligosaccharide from growing alpha-1,4-glucan chains and the subsequent attachment of the oligosaccharide to the alpha-1,6 position. This is 1,4-alpha-glucan branching enzyme GlgB from Shigella boydii serotype 4 (strain Sb227).